The following is a 72-amino-acid chain: Translation initiation factor IF-1 1 (72 aa).

The S1-like domain occupies 1 to 72; it reads MAKEDRIEMQ…SRARIIFRAK (72 aa).

This sequence belongs to the IF-1 family. As to quaternary structure, component of the 30S ribosomal translation pre-initiation complex which assembles on the 30S ribosome in the order IF-2 and IF-3, IF-1 and N-formylmethionyl-tRNA(fMet); mRNA recruitment can occur at any time during PIC assembly.

It is found in the cytoplasm. One of the essential components for the initiation of protein synthesis. Stabilizes the binding of IF-2 and IF-3 on the 30S subunit to which N-formylmethionyl-tRNA(fMet) subsequently binds. Helps modulate mRNA selection, yielding the 30S pre-initiation complex (PIC). Upon addition of the 50S ribosomal subunit IF-1, IF-2 and IF-3 are released leaving the mature 70S translation initiation complex. The polypeptide is Translation initiation factor IF-1 1 (Methylobacillus flagellatus (strain ATCC 51484 / DSM 6875 / VKM B-1610 / KT)).